A 354-amino-acid chain; its full sequence is MTGHPDCPGFDDLPRAHGEVTCRGRIRVSPEDFRVDEILGFEPTGQGEHAFLHIRKTGENTDHVAQRIARLAGVKPMDVGYAGLKDRHAVTTQWFSVRLAGKADPDWRALESESIAVLRHTRHDRKLKRGALAGNRFRIILRGLEGVCDGLEARCAAIRAAGVPNYFGPQRFGHGGRNLQEALRLFADPRRRIDRNKRSLYLSAARSYLFNRVLAGRVEHGSWNRGVEGDAFMFTGSNAFFKTDKLDEDIQRRVEALTIHPSGTLWGRGDPVISGTALAMERVALAQCAEFREGLERCGLEVGRRALRLPVPDLEFAGVEDSACELTFSLPAGTYATTVLRELVEFDPQGWPDT.

Catalysis depends on D86, which acts as the Nucleophile. The 148-residue stretch at 162–309 folds into the TRUD domain; the sequence is GVPNYFGPQR…LEVGRRALRL (148 aa).

It belongs to the pseudouridine synthase TruD family.

The enzyme catalyses uridine(13) in tRNA = pseudouridine(13) in tRNA. Functionally, responsible for synthesis of pseudouridine from uracil-13 in transfer RNAs. The protein is tRNA pseudouridine synthase D of Methylococcus capsulatus (strain ATCC 33009 / NCIMB 11132 / Bath).